The following is a 259-amino-acid chain: MSTSIIVTGAGGRMGSTICRMAQEDPVLTLAAVVERPERLASLDVWKCPSGSDPDAVFATVPGGVVVDFTSPEASMANARAAARAGVSHVIGTTGLTAEQKAELADLARTARIFWAPNMSIGVNVLLKILPQLVQQLGEQYDLEMVELHHNRKKDSPSGTALRLAECLAEARGWNLPDVANYHREGIIGERPKDEIGIQTIRGGDVVGVHTIYAMGPGERIEITHQAHSRENFAQGALRAAKWLPQQQPGTLYSMLDML.

NAD(+) is bound by residues 9 to 14 (GAGGRM) and E35. R36 contributes to the NADP(+) binding site. NAD(+) contacts are provided by residues 92–94 (GTT) and 116–119 (APNM). Residue H149 is the Proton donor/acceptor of the active site. H150 serves as a coordination point for (S)-2,3,4,5-tetrahydrodipicolinate. K153 acts as the Proton donor in catalysis. A (S)-2,3,4,5-tetrahydrodipicolinate-binding site is contributed by 159–160 (GT).

It belongs to the DapB family.

The protein localises to the cytoplasm. The enzyme catalyses (S)-2,3,4,5-tetrahydrodipicolinate + NAD(+) + H2O = (2S,4S)-4-hydroxy-2,3,4,5-tetrahydrodipicolinate + NADH + H(+). It carries out the reaction (S)-2,3,4,5-tetrahydrodipicolinate + NADP(+) + H2O = (2S,4S)-4-hydroxy-2,3,4,5-tetrahydrodipicolinate + NADPH + H(+). It participates in amino-acid biosynthesis; L-lysine biosynthesis via DAP pathway; (S)-tetrahydrodipicolinate from L-aspartate: step 4/4. Its function is as follows. Catalyzes the conversion of 4-hydroxy-tetrahydrodipicolinate (HTPA) to tetrahydrodipicolinate. This chain is 4-hydroxy-tetrahydrodipicolinate reductase, found in Nitratidesulfovibrio vulgaris (strain DSM 19637 / Miyazaki F) (Desulfovibrio vulgaris).